We begin with the raw amino-acid sequence, 231 residues long: 7-cyano-7-deazaguanine synthase (231 aa).

Residue 11–21 (LSAGLDSTVNA) coordinates ATP. Zn(2+)-binding residues include C197, C205, C208, and C211.

It belongs to the QueC family. Zn(2+) is required as a cofactor.

The enzyme catalyses 7-carboxy-7-deazaguanine + NH4(+) + ATP = 7-cyano-7-deazaguanine + ADP + phosphate + H2O + H(+). Its pathway is purine metabolism; 7-cyano-7-deazaguanine biosynthesis. Its function is as follows. Catalyzes the ATP-dependent conversion of 7-carboxy-7-deazaguanine (CDG) to 7-cyano-7-deazaguanine (preQ(0)). The sequence is that of 7-cyano-7-deazaguanine synthase from Bdellovibrio bacteriovorus (strain ATCC 15356 / DSM 50701 / NCIMB 9529 / HD100).